The chain runs to 476 residues: Aspartyl/glutamyl-tRNA(Asn/Gln) amidotransferase subunit B (476 aa).

This sequence belongs to the GatB/GatE family. GatB subfamily. As to quaternary structure, heterotrimer of A, B and C subunits.

It catalyses the reaction L-glutamyl-tRNA(Gln) + L-glutamine + ATP + H2O = L-glutaminyl-tRNA(Gln) + L-glutamate + ADP + phosphate + H(+). The enzyme catalyses L-aspartyl-tRNA(Asn) + L-glutamine + ATP + H2O = L-asparaginyl-tRNA(Asn) + L-glutamate + ADP + phosphate + 2 H(+). Allows the formation of correctly charged Asn-tRNA(Asn) or Gln-tRNA(Gln) through the transamidation of misacylated Asp-tRNA(Asn) or Glu-tRNA(Gln) in organisms which lack either or both of asparaginyl-tRNA or glutaminyl-tRNA synthetases. The reaction takes place in the presence of glutamine and ATP through an activated phospho-Asp-tRNA(Asn) or phospho-Glu-tRNA(Gln). The polypeptide is Aspartyl/glutamyl-tRNA(Asn/Gln) amidotransferase subunit B (Listeria monocytogenes serotype 4b (strain CLIP80459)).